The chain runs to 123 residues: Small ribosomal subunit protein uS13c (123 aa).

The disordered stretch occupies residues 90-123; sequence GKRHRNNLPVRGQRTRTNARSRRGSKKTVTGKKK. The span at 102–123 shows a compositional bias: basic residues; sequence QRTRTNARSRRGSKKTVTGKKK.

This sequence belongs to the universal ribosomal protein uS13 family. Part of the 30S ribosomal subunit.

It is found in the plastid. The protein localises to the chloroplast. Functionally, located at the top of the head of the 30S subunit, it contacts several helices of the 16S rRNA. The chain is Small ribosomal subunit protein uS13c from Trieres chinensis (Marine centric diatom).